The primary structure comprises 656 residues: Receptor-type tyrosine-protein phosphatase R (656 aa).

A signal peptide spans 1 to 23 (MRRAVGFPALCLLLNLHAAGCFS). O-linked (Xyl...) (chondroitin sulfate) serine glycosylation is present at Ser23. The Extracellular segment spans residues 24–226 (RNNDHFLAIR…EADKIWSKEG (203 aa)). A glycan (N-linked (GlcNAc...) asparagine) is linked at Asn128. The helical transmembrane segment at 227-247 (FYAVVIFLSIFIIIVTCLMII) threads the bilayer. The Cytoplasmic segment spans residues 248–656 (YRLKERLQLS…ESRLSPETVE (409 aa)). The disordered stretch occupies residues 269 to 289 (HLSPIARQQAQSEAKTTHSMV). Residue Ser271 is modified to Phosphoserine. A compositionally biased stretch (polar residues) spans 274-289 (ARQQAQSEAKTTHSMV). Ser338 is subject to Phosphoserine; by PKA. One can recognise a Tyrosine-protein phosphatase domain in the interval 392-646 (LQSEFMEIPM…EFVHHALCLF (255 aa)). Residues Asp553, 587–593 (CSAGIGR), and Gln631 contribute to the substrate site. The active-site Phosphocysteine intermediate is Cys587.

It belongs to the protein-tyrosine phosphatase family. Receptor class 7 subfamily. Interacts with MAPKs. Expressed in the heart, brain, spleen, lung, liver, skeletal muscle, kidney and testis. Isoform alpha is expressed throughout the granular layer of the cerebellar but not within the Purkinje cells, also in the villi of the ileum and jejunum and both the villi and crypts of the duodenum. Isoform beta is expressed only in the Purkinje cells. Isoform gamma is expressed throughout the brain, the villi and crypts of the duodenum, jejunum and ileum and expressed at low levels in the proximal colon.

It is found in the cell membrane. Its subcellular location is the cytoplasm. It carries out the reaction O-phospho-L-tyrosyl-[protein] + H2O = L-tyrosyl-[protein] + phosphate. Its function is as follows. Sequesters mitogen-activated protein kinases (MAPKs) such as MAPK1, MAPK3 and MAPK14 in the cytoplasm in an inactive form. The MAPKs bind to a dephosphorylated kinase interacting motif, phosphorylation of which by the protein kinase A complex releases the MAPKs for activation and translocation into the nucleus. Isoform gamma may have a role in patterning and cellular proliferation of skeletal elements in the precartilaginous/cartilaginous skeleton. The sequence is that of Receptor-type tyrosine-protein phosphatase R (Ptprr) from Mus musculus (Mouse).